The primary structure comprises 83 residues: Protein WFDC9 (83 aa).

A signal peptide spans 1-24 (MKPWIIVLTVSAHGILVFLHVLGS).

The protein resides in the secreted. This Mus musculus (Mouse) protein is Protein WFDC9 (Wfdc9).